The following is a 475-amino-acid chain: Ribulose bisphosphate carboxylase large chain (475 aa).

Positions 1 to 2 (MS) are excised as a propeptide. Residue Pro-3 is modified to N-acetylproline. Lys-14 is subject to N6,N6,N6-trimethyllysine. The substrate site is built by Asn-123 and Thr-173. Lys-175 functions as the Proton acceptor in the catalytic mechanism. Lys-177 lines the substrate pocket. The Mg(2+) site is built by Lys-201, Asp-203, and Glu-204. Lys-201 is subject to N6-carboxylysine. His-294 (proton acceptor) is an active-site residue. Substrate-binding residues include Arg-295, His-327, and Ser-379.

It belongs to the RuBisCO large chain family. Type I subfamily. As to quaternary structure, heterohexadecamer of 8 large chains and 8 small chains; disulfide-linked. The disulfide link is formed within the large subunit homodimers. It depends on Mg(2+) as a cofactor. Post-translationally, the disulfide bond which can form in the large chain dimeric partners within the hexadecamer appears to be associated with oxidative stress and protein turnover.

Its subcellular location is the plastid. It is found in the chloroplast. The enzyme catalyses 2 (2R)-3-phosphoglycerate + 2 H(+) = D-ribulose 1,5-bisphosphate + CO2 + H2O. It carries out the reaction D-ribulose 1,5-bisphosphate + O2 = 2-phosphoglycolate + (2R)-3-phosphoglycerate + 2 H(+). In terms of biological role, ruBisCO catalyzes two reactions: the carboxylation of D-ribulose 1,5-bisphosphate, the primary event in carbon dioxide fixation, as well as the oxidative fragmentation of the pentose substrate in the photorespiration process. Both reactions occur simultaneously and in competition at the same active site. The chain is Ribulose bisphosphate carboxylase large chain from Anthoceros angustus (Hornwort).